The following is a 442-amino-acid chain: MENGKMNSLIAQYPLVKDLVALKETTWFNPGTTSLAEGLPYVGLTEQDVQDAHARLSRFAPYLAKAFPETAATGGIIESELVAIPAMQKRLEKEYQQPISGQLLLKKDSHLPISGSIKARGGIYEVLAHAEKLALEAGLLTLDADYSKLLSPEFKQFFSQYSIAVGSTGNLGLSIGIMSARIGFKVTVHMSADARAWKKAKLRSHGVTVVEYEQDYGVAVEEGRKAAQSDPNCFFIDDENSRTLFLGYSVAGQRLKAQFAQQGRIVDADNPLFVYLPCGVGGGPGGVAFGLKLAFGDHVHCFFAEPTHSPCMLLGVHTGLHDQISVQDIGIDNLTAADGLAVGRASGFVGRAMERLLDGFYTLSDQTMYDMLGWLAQEEGIRLEPSALAGMAGPQRVCASVSYQQMHGFNAEQLHNATHLVWATGGGMVPEEEMNQYLAKGR.

K118 bears the N6-(pyridoxal phosphate)lysine mark.

Belongs to the serine/threonine dehydratase family. DsdA subfamily. Monomer. It depends on pyridoxal 5'-phosphate as a cofactor.

The catalysed reaction is D-serine = pyruvate + NH4(+). The protein is D-serine dehydratase of Shigella dysenteriae serotype 1 (strain Sd197).